The chain runs to 201 residues: Potassium-transporting ATPase KdpC subunit (201 aa).

A helical membrane pass occupies residues 7–29 (PALVLLTALTAITGLAYPLAMTG).

The protein belongs to the KdpC family. As to quaternary structure, the system is composed of three essential subunits: KdpA, KdpB and KdpC.

The protein localises to the cell inner membrane. Part of the high-affinity ATP-driven potassium transport (or Kdp) system, which catalyzes the hydrolysis of ATP coupled with the electrogenic transport of potassium into the cytoplasm. This subunit acts as a catalytic chaperone that increases the ATP-binding affinity of the ATP-hydrolyzing subunit KdpB by the formation of a transient KdpB/KdpC/ATP ternary complex. This chain is Potassium-transporting ATPase KdpC subunit, found in Methylobacterium radiotolerans (strain ATCC 27329 / DSM 1819 / JCM 2831 / NBRC 15690 / NCIMB 10815 / 0-1).